Reading from the N-terminus, the 299-residue chain is CCR4-NOT transcription complex subunit 9 (299 aa).

Met1 carries the post-translational modification N-acetylmethionine.

This sequence belongs to the CNOT9 family. In terms of assembly, homodimer. Component of the CCR4-NOT complex; distinct complexes seem to exist that differ in the participation of probably mutually exclusive catalytic subunits. Interacts with MYB, ATF2, RARA, RARB, RARG, RXRA, RXRB and RXRG. Identified in a complex with ATF2 bound to target DNA. Interacts with NANOS2. Directly interacts with ZNF335.

Its subcellular location is the nucleus. It is found in the cytoplasm. It localises to the P-body. In terms of biological role, component of the CCR4-NOT complex which is one of the major cellular mRNA deadenylases and is linked to various cellular processes including bulk mRNA degradation, miRNA-mediated repression, translational repression during translational initiation and general transcription regulation. Additional complex functions may be a consequence of its influence on mRNA expression. Involved in down-regulation of MYB- and JUN-dependent transcription. Enhances ligand-dependent transcriptional activity of nuclear hormone receptors. May play a role in cell differentiation. This Bos taurus (Bovine) protein is CCR4-NOT transcription complex subunit 9.